The chain runs to 314 residues: Replication initiation protein (314 aa).

The span at 1–18 (MSKKAEEIQAKQSLEKEN) shows a compositional bias: basic and acidic residues. Positions 1–25 (MSKKAEEIQAKQSLEKENSNFSKTG) are disordered.

It belongs to the plasmid replication initiation factor family.

Functionally, this protein is probably a specific topoisomerase involved in initiating replication. This protein is specifically required and may be rate-limiting for replication of the plasmid in vivo. This chain is Replication initiation protein (repE), found in Staphylococcus aureus.